Reading from the N-terminus, the 140-residue chain is Lysozyme B (140 aa).

An N-terminal signal peptide occupies residues methionine 1–glycine 18. In terms of domain architecture, C-type lysozyme spans arginine 19–phenylalanine 140. 4 disulfides stabilise this stretch: cysteine 24/cysteine 139, cysteine 45/cysteine 129, cysteine 80/cysteine 96, and cysteine 92/cysteine 110. Catalysis depends on residues glutamate 50 and aspartate 68.

It belongs to the glycosyl hydrolase 22 family. In terms of tissue distribution, found in the midgut.

The catalysed reaction is Hydrolysis of (1-&gt;4)-beta-linkages between N-acetylmuramic acid and N-acetyl-D-glucosamine residues in a peptidoglycan and between N-acetyl-D-glucosamine residues in chitodextrins.. Unlikely to play an active role in the humoral immune defense. May have a function in the digestion of bacteria in the food. This Drosophila melanogaster (Fruit fly) protein is Lysozyme B (LysB).